We begin with the raw amino-acid sequence, 136 residues long: Interleukin-13 (136 aa).

The signal sequence occupies residues 1 to 18 (MALWLTVVIAFTCIGGLA). Residues Asn38, Asn49, Asn57, Asn72, Asn75, and Asn131 are each glycosylated (N-linked (GlcNAc...) asparagine). 2 disulfides stabilise this stretch: Cys48–Cys76 and Cys64–Cys90.

The protein belongs to the IL-4/IL-13 family. As to quaternary structure, interacts with IL13RA2.

The protein resides in the secreted. In terms of biological role, cytokine that plays important roles in allergic inflammation and immune response to parasite infection. Synergizes with IL2 in regulating interferon-gamma synthesis. Stimulates B-cell proliferation, and activation of eosinophils, basophils, and mast cells. Plays an important role in controlling IL33 activity by modulating the production of transmembrane and soluble forms of interleukin-1 receptor-like 1/IL1RL1. Displays the capacity to antagonize Th1-driven proinflammatory immune response and downregulates synthesis of many proinflammatory cytokines including IL1, IL6, IL10, IL12 and TNF-alpha through a mechanism that partially involves suppression of NF-kappa-B. Also functions on nonhematopoietic cells, including endothelial cells where it induces vascular cell adhesion protein 1/VCAM1, which is important in the recruitment of eosinophils. Exerts its biological effects through its receptors which comprises the IL4R chain and the IL13RA1 chain, to activate JAK1 and TYK2, leading to the activation of STAT6. Aside from IL13RA1, another receptor IL13RA2 acts as a high affinity decoy for IL13 and mediates internalization and depletion of extracellular IL13. The protein is Interleukin-13 (IL13) of Camelus bactrianus (Bactrian camel).